Consider the following 84-residue polypeptide: Putative ribosomal RNA large subunit methyltransferase H 2 (84 aa).

S-adenosyl-L-methionine is bound by residues Gly33 and 52–57 (FSKMTF).

This sequence belongs to the RNA methyltransferase RlmH family. In terms of assembly, homodimer.

It localises to the cytoplasm. The enzyme catalyses pseudouridine(1915) in 23S rRNA + S-adenosyl-L-methionine = N(3)-methylpseudouridine(1915) in 23S rRNA + S-adenosyl-L-homocysteine + H(+). Its function is as follows. Specifically methylates the pseudouridine at position 1915 (m3Psi1915) in 23S rRNA. This Clostridium perfringens (strain SM101 / Type A) protein is Putative ribosomal RNA large subunit methyltransferase H 2 (rlmH2).